A 72-amino-acid chain; its full sequence is Translation initiation factor IF-1 (72 aa).

The S1-like domain maps to 1-72; sequence MARDDVIEVD…DKGRITFRYK (72 aa).

The protein belongs to the IF-1 family. Component of the 30S ribosomal translation pre-initiation complex which assembles on the 30S ribosome in the order IF-2 and IF-3, IF-1 and N-formylmethionyl-tRNA(fMet); mRNA recruitment can occur at any time during PIC assembly.

Its subcellular location is the cytoplasm. Functionally, one of the essential components for the initiation of protein synthesis. Stabilizes the binding of IF-2 and IF-3 on the 30S subunit to which N-formylmethionyl-tRNA(fMet) subsequently binds. Helps modulate mRNA selection, yielding the 30S pre-initiation complex (PIC). Upon addition of the 50S ribosomal subunit IF-1, IF-2 and IF-3 are released leaving the mature 70S translation initiation complex. The sequence is that of Translation initiation factor IF-1 from Helicobacter pylori (strain HPAG1).